A 2280-amino-acid chain; its full sequence is Acetyl-CoA carboxylase (2280 aa).

Positions 68 to 577 (VITSILIANN…TTGWLDRLIA (510 aa)) constitute a Biotin carboxylation domain. Positions 226–418 (ETNIVTVDDD…LPAAQLQVAM (193 aa)) constitute an ATP-grasp domain. Position 266-271 (266-271 (GGGGKG)) interacts with ATP. Positions 375, 389, and 391 each coordinate Mn(2+). The active site involves R393. The Biotinyl-binding domain maps to 704–778 (LEQENDPTQL…DAGDILGILT (75 aa)). K745 carries the post-translational modification N6-biotinyllysine. A phosphoserine mark is found at S1179 and S1181. The CoA carboxyltransferase N-terminal domain occupies 1524-1863 (PYPTKEWLQP…KRNNPVPISP (340 aa)). The carboxyltransferase stretch occupies residues 1524 to 2181 (PYPTKEWLQP…EHYALQKITQ (658 aa)). CoA contacts are provided by R1772, K2074, and R2076. Positions 1867–2181 (TWDRDVEFYP…EHYALQKITQ (315 aa)) constitute a CoA carboxyltransferase C-terminal domain.

Interacts with sad1. Biotin is required as a cofactor. The cofactor is Mn(2+).

The protein resides in the cytoplasm. It carries out the reaction hydrogencarbonate + acetyl-CoA + ATP = malonyl-CoA + ADP + phosphate + H(+). It catalyses the reaction N(6)-biotinyl-L-lysyl-[protein] + hydrogencarbonate + ATP = N(6)-carboxybiotinyl-L-lysyl-[protein] + ADP + phosphate + H(+). The protein operates within lipid metabolism; malonyl-CoA biosynthesis; malonyl-CoA from acetyl-CoA: step 1/1. With respect to regulation, by phosphorylation. Functionally, carries out three functions: biotin carboxyl carrier protein, biotin carboxylase and carboxyltransferase. The protein is Acetyl-CoA carboxylase (cut6) of Schizosaccharomyces pombe (strain 972 / ATCC 24843) (Fission yeast).